Consider the following 336-residue polypeptide: Flavonoid 4'-O-methyltransferase 5 (336 aa).

Residues Y140 and D203 each coordinate S-adenosyl-L-methionine. Catalysis depends on H241, which acts as the Proton acceptor.

It belongs to the class I-like SAM-binding methyltransferase superfamily. Cation-independent O-methyltransferase family. In terms of assembly, homodimer. As to expression, expressed in leaves.

The catalysed reaction is genkwanin + S-adenosyl-L-methionine = apigenin 4',7-dimethyl ether + S-adenosyl-L-homocysteine. The enzyme catalyses cirsiliol + S-adenosyl-L-methionine = eupatorin + S-adenosyl-L-homocysteine + H(+). It catalyses the reaction cirsimaritin + S-adenosyl-L-methionine = salvigenin + S-adenosyl-L-homocysteine + H(+). It carries out the reaction scutellarein 7-methyl ether + S-adenosyl-L-methionine = ladanein + S-adenosyl-L-homocysteine + H(+). The catalysed reaction is (2S)-sakuranetin + S-adenosyl-L-methionine = (2S)-naringenin 4',7-dimethyl ether + S-adenosyl-L-homocysteine + H(+). Its pathway is flavonoid metabolism. With respect to regulation, substrate inhibition by genkwanin (GENK) at concentrations above 10 mM. Flavonoid 4'-O-methyltransferase involved in the biosynthesis of polymethoxylated flavonoids natural products such as nevadensin and salvigenin, aroma compounds which contribute to the flavor of sweet basil, and exhibit pharmacological activities such as anti-allergic, anti-oxidant, antibacterial, anti-proliferative, and anti-inflammatory effects. Catalyzes S-adenosylmethionine-dependent regioselective 4'-O-methylation of flavonoids; active on various hydroxylated flavonoid substrates, including scutellarein-7-methyl ether (SCU7Me) and, with a lower efficiency, cirsimaritin (CIRM), sakuranetin (NAR7Me), ladanein (LAD) and genkwanin (GENK). In Ocimum basilicum (Sweet basil), this protein is Flavonoid 4'-O-methyltransferase 5.